The following is a 932-amino-acid chain: UPF0182 protein Dred_1797 (932 aa).

Helical transmembrane passes span 11–31 (LVIL…GLYI), 53–73 (IGLR…NLML), 118–138 (LTLA…SSVA), 180–200 (ILAS…LVTD), 209–229 (IFRF…FFVI), 264–284 (YKAL…NIFL), and 292–312 (YAIG…PAII). The disordered stretch occupies residues 861–883 (DRPQQGVPPATDQPAGQQPAPEK).

The protein belongs to the UPF0182 family.

It localises to the cell membrane. The sequence is that of UPF0182 protein Dred_1797 from Desulforamulus reducens (strain ATCC BAA-1160 / DSM 100696 / MI-1) (Desulfotomaculum reducens).